A 294-amino-acid chain; its full sequence is Metallophosphoesterase MPPED2 (294 aa).

The Mn(2+) site is built by aspartate 65, histidine 67, aspartate 86, asparagine 117, and histidine 213. 117–118 contacts GMP; that stretch reads NH. GMP is bound by residues 225-226 and 252-255; these read KE and GIHE. Histidine 254 lines the Mn(2+) pocket.

This sequence belongs to the UPF0046 family. Homodimer. Mn(2+) is required as a cofactor. Requires Co(2+) as cofactor.

Inhibited by nmolar levels of AMP and GMP. Displays low metallophosphoesterase activity (in vitro). May play a role in the development of the nervous system. This chain is Metallophosphoesterase MPPED2 (Mpped2), found in Mus musculus (Mouse).